We begin with the raw amino-acid sequence, 389 residues long: NADH-quinone oxidoreductase subunit D (389 aa).

This sequence belongs to the complex I 49 kDa subunit family. In terms of assembly, NDH-1 is composed of 14 different subunits. Subunits NuoB, C, D, E, F, and G constitute the peripheral sector of the complex.

The protein localises to the cell inner membrane. The catalysed reaction is a quinone + NADH + 5 H(+)(in) = a quinol + NAD(+) + 4 H(+)(out). Its function is as follows. NDH-1 shuttles electrons from NADH, via FMN and iron-sulfur (Fe-S) centers, to quinones in the respiratory chain. The immediate electron acceptor for the enzyme in this species is believed to be ubiquinone. Couples the redox reaction to proton translocation (for every two electrons transferred, four hydrogen ions are translocated across the cytoplasmic membrane), and thus conserves the redox energy in a proton gradient. The sequence is that of NADH-quinone oxidoreductase subunit D from Rickettsia prowazekii (strain Madrid E).